A 139-amino-acid chain; its full sequence is Protein archease (139 aa).

Ca(2+) is bound by residues Asp-12, Asp-138, and Ile-139.

The protein belongs to the archease family.

Functionally, activates the tRNA-splicing ligase complex by facilitating the enzymatic turnover of catalytic subunit RtcB. Acts by promoting the guanylylation of RtcB, a key intermediate step in tRNA ligation. Can also alter the NTP specificity of RtcB such that ATP, dGTP or ITP is used efficiently. The chain is Protein archease from Sulfurisphaera tokodaii (strain DSM 16993 / JCM 10545 / NBRC 100140 / 7) (Sulfolobus tokodaii).